Here is a 347-residue protein sequence, read N- to C-terminus: NADH-ubiquinone oxidoreductase chain 2 (347 aa).

A run of 10 helical transmembrane segments spans residues 13–33 (IFAG…WVGL), 55–75 (AAIK…MAIL), 96–116 (LMIV…FWVP), 123–143 (PLMS…SIMY), 150–170 (NVSL…WGGL), 178–198 (ILAY…PYNP), 201–221 (TILN…LLNL), 247–267 (TLLS…WLII), 277–297 (ITPT…LRLI), and 325–345 (FLPT…FMLM).

The protein belongs to the complex I subunit 2 family. In terms of assembly, core subunit of respiratory chain NADH dehydrogenase (Complex I) which is composed of 45 different subunits. Interacts with TMEM242.

Its subcellular location is the mitochondrion inner membrane. The catalysed reaction is a ubiquinone + NADH + 5 H(+)(in) = a ubiquinol + NAD(+) + 4 H(+)(out). Its function is as follows. Core subunit of the mitochondrial membrane respiratory chain NADH dehydrogenase (Complex I) which catalyzes electron transfer from NADH through the respiratory chain, using ubiquinone as an electron acceptor. Essential for the catalytic activity and assembly of complex I. The protein is NADH-ubiquinone oxidoreductase chain 2 of Gorilla gorilla gorilla (Western lowland gorilla).